Here is a 71-residue protein sequence, read N- to C-terminus: Large ribosomal subunit protein bL31 (71 aa).

Residues C16, C18, C37, and C40 each coordinate Zn(2+).

It belongs to the bacterial ribosomal protein bL31 family. Type A subfamily. As to quaternary structure, part of the 50S ribosomal subunit. Zn(2+) is required as a cofactor.

Functionally, binds the 23S rRNA. This chain is Large ribosomal subunit protein bL31, found in Marinomonas sp. (strain MWYL1).